We begin with the raw amino-acid sequence, 308 residues long: Ribosomal RNA large subunit methyltransferase F (308 aa).

This sequence belongs to the methyltransferase superfamily. METTL16/RlmF family.

It is found in the cytoplasm. The catalysed reaction is adenosine(1618) in 23S rRNA + S-adenosyl-L-methionine = N(6)-methyladenosine(1618) in 23S rRNA + S-adenosyl-L-homocysteine + H(+). Specifically methylates the adenine in position 1618 of 23S rRNA. In Escherichia coli (strain K12 / MC4100 / BW2952), this protein is Ribosomal RNA large subunit methyltransferase F.